A 263-amino-acid chain; its full sequence is LIM and SH3 domain protein 1 (263 aa).

Met-1 carries the N-acetylmethionine modification. The region spanning 3-63 is the LIM zinc-binding domain; the sequence is PNCARCGKIV…NAHYPKQSFT (61 aa). An N6-acetyllysine modification is found at Lys-42. 2 Nebulin repeats span residues 64-95 and 97-131; these read MVAD…KNKG and GFSV…KSRM. Thr-68 is subject to Phosphothreonine. An N6-methyllysine modification is found at Lys-75. Position 99 is a phosphoserine (Ser-99). Position 104 is a phosphothreonine (Thr-104). Lys-112 bears the N6-succinyllysine mark. Phosphoserine is present on residues Ser-118 and Ser-134. The tract at residues 122 to 207 is disordered; it reads YHEEFEKSRM…QRSAPGGGGK (86 aa). The segment covering 148-162 has biased composition (polar residues); that stretch reads DSSSYRRPTEQQQPQ. The SH3 domain occupies 204-263; that stretch reads GGGKRYRAVYDYSAADEDEVSFQDGDTIVNVQQIDDGWMYGTVERTGDTGMLPANYVEAI.

Interacts with F-actin. Interacts with ANKRD54. Interacts with KBTBD10. Phosphorylated. In terms of tissue distribution, expressed in a wide range of tissues (but not the heart or skeletal muscle), the expression is specific for certain actin-rich cell types within these tissues. Expression is prominent in the cortical regions of ion-transporting duct cells in the pancreas, in the salivary parotid gland and in certain F-actin-rich cells in the distal tubule/collecting duct. In primary cultures of gastric fibroblasts, expression is mainly within the tips of lamellipodia and at the leading edges of membrane ruffles.

It is found in the cytoplasm. Its subcellular location is the cell cortex. The protein localises to the cytoskeleton. Functionally, plays an important role in the regulation of dynamic actin-based, cytoskeletal activities. Agonist-dependent changes in LASP1 phosphorylation may also serve to regulate actin-associated ion transport activities, not only in the parietal cell but also in certain other F-actin-rich secretory epithelial cell types. The protein is LIM and SH3 domain protein 1 of Rattus norvegicus (Rat).